A 231-amino-acid chain; its full sequence is E3 ubiquitin-protein ligase At3g02290 (231 aa).

The span at 103-118 (GSSHSHEEVEPLRSDS) shows a compositional bias: basic and acidic residues. The interval 103–125 (GSSHSHEEVEPLRSDSDADSESF) is disordered. An RING-type; atypical zinc finger spans residues 181 to 222 (CPTCLEEYTSENPKIVTKCSHHFHLSCIYEWMERSENCPVCG).

The protein resides in the cytoplasm. The enzyme catalyses S-ubiquitinyl-[E2 ubiquitin-conjugating enzyme]-L-cysteine + [acceptor protein]-L-lysine = [E2 ubiquitin-conjugating enzyme]-L-cysteine + N(6)-ubiquitinyl-[acceptor protein]-L-lysine.. The protein operates within protein modification; protein ubiquitination. Mediates E2-dependent protein ubiquitination. The sequence is that of E3 ubiquitin-protein ligase At3g02290 from Arabidopsis thaliana (Mouse-ear cress).